The following is a 1221-amino-acid chain: DNA-directed RNA polymerase subunit beta' (1221 aa).

Zn(2+) contacts are provided by cysteine 60, cysteine 62, cysteine 75, and cysteine 78. 3 residues coordinate Mg(2+): aspartate 449, aspartate 451, and aspartate 453. Residues cysteine 821, cysteine 896, cysteine 903, and cysteine 906 each coordinate Zn(2+).

Belongs to the RNA polymerase beta' chain family. The RNAP catalytic core consists of 2 alpha, 1 beta, 1 beta' and 1 omega subunit. When a sigma factor is associated with the core the holoenzyme is formed, which can initiate transcription. Requires Mg(2+) as cofactor. It depends on Zn(2+) as a cofactor.

The enzyme catalyses RNA(n) + a ribonucleoside 5'-triphosphate = RNA(n+1) + diphosphate. DNA-dependent RNA polymerase catalyzes the transcription of DNA into RNA using the four ribonucleoside triphosphates as substrates. The sequence is that of DNA-directed RNA polymerase subunit beta' from Lactobacillus delbrueckii subsp. bulgaricus (strain ATCC BAA-365 / Lb-18).